We begin with the raw amino-acid sequence, 347 residues long: Probable dual-specificity RNA methyltransferase RlmN (347 aa).

Residue glutamate 94 is the Proton acceptor of the active site. Positions 100-334 (TETRTTACVS…AKVRHSRGKD (235 aa)) constitute a Radical SAM core domain. Cysteine 107 and cysteine 339 are oxidised to a cystine. [4Fe-4S] cluster is bound by residues cysteine 114, cysteine 118, and cysteine 121. Residues 165 to 166 (GE), serine 197, 220 to 222 (SLH), and asparagine 296 each bind S-adenosyl-L-methionine. Cysteine 339 functions as the S-methylcysteine intermediate in the catalytic mechanism.

The protein belongs to the radical SAM superfamily. RlmN family. Requires [4Fe-4S] cluster as cofactor.

The protein resides in the cytoplasm. The catalysed reaction is adenosine(2503) in 23S rRNA + 2 reduced [2Fe-2S]-[ferredoxin] + 2 S-adenosyl-L-methionine = 2-methyladenosine(2503) in 23S rRNA + 5'-deoxyadenosine + L-methionine + 2 oxidized [2Fe-2S]-[ferredoxin] + S-adenosyl-L-homocysteine. The enzyme catalyses adenosine(37) in tRNA + 2 reduced [2Fe-2S]-[ferredoxin] + 2 S-adenosyl-L-methionine = 2-methyladenosine(37) in tRNA + 5'-deoxyadenosine + L-methionine + 2 oxidized [2Fe-2S]-[ferredoxin] + S-adenosyl-L-homocysteine. Specifically methylates position 2 of adenine 2503 in 23S rRNA and position 2 of adenine 37 in tRNAs. The sequence is that of Probable dual-specificity RNA methyltransferase RlmN from Flavobacterium psychrophilum (strain ATCC 49511 / DSM 21280 / CIP 103535 / JIP02/86).